Consider the following 146-residue polypeptide: Large ribosomal subunit protein uL16 (146 aa).

It belongs to the universal ribosomal protein uL16 family. As to quaternary structure, part of the 50S ribosomal subunit.

Its function is as follows. Binds 23S rRNA and is also seen to make contacts with the A and possibly P site tRNAs. The sequence is that of Large ribosomal subunit protein uL16 from Lactobacillus helveticus (strain DPC 4571).